A 155-amino-acid chain; its full sequence is Transcription antitermination protein NusB (155 aa).

Belongs to the NusB family.

Functionally, involved in transcription antitermination. Required for transcription of ribosomal RNA (rRNA) genes. Binds specifically to the boxA antiterminator sequence of the ribosomal RNA (rrn) operons. In Vibrio campbellii (strain ATCC BAA-1116), this protein is Transcription antitermination protein NusB.